Consider the following 178-residue polypeptide: Protein GrpE (178 aa).

It belongs to the GrpE family. As to quaternary structure, homodimer.

It localises to the cytoplasm. Functionally, participates actively in the response to hyperosmotic and heat shock by preventing the aggregation of stress-denatured proteins, in association with DnaK and GrpE. It is the nucleotide exchange factor for DnaK and may function as a thermosensor. Unfolded proteins bind initially to DnaJ; upon interaction with the DnaJ-bound protein, DnaK hydrolyzes its bound ATP, resulting in the formation of a stable complex. GrpE releases ADP from DnaK; ATP binding to DnaK triggers the release of the substrate protein, thus completing the reaction cycle. Several rounds of ATP-dependent interactions between DnaJ, DnaK and GrpE are required for fully efficient folding. In Bordetella avium (strain 197N), this protein is Protein GrpE.